The following is a 1286-amino-acid chain: Autotransporter adhesin AIDA-I (1286 aa).

Positions 1 to 49 (MNKAYSIIWSHSRQAWIVASELARGHGFVLAKNTLLVLAVVSTIGNAFA) are cleaved as a signal peptide. O-alpha-linked (glycero-D-manno-heptose) serine glycosylation is found at serine 102, serine 111, and serine 116. Threonine 154 carries O-alpha-linked (glycero-D-manno-heptose) threonine glycosylation. Serine 242, serine 252, serine 334, serine 391, serine 409, serine 539, serine 545, serine 558, serine 569, serine 576, serine 577, and serine 582 each carry an O-alpha-linked (glycero-D-manno-heptose) serine glycan. The Autotransporter domain occupies 998-1286 (TQPESASVWM…SGALGIKYSF (289 aa)). A beta stranded transmembrane segment spans residues 1006-1012 (WMKITGG). Topologically, residues 1013 to 1029 (ISSGKLNDGQNKTTTNQ) are extracellular. Residues 1030 to 1040 (FINQLGGDIYK) form a beta stranded membrane-spanning segment. At 1041 to 1047 (FHAEQLG) the chain is on the periplasmic side. A beta stranded transmembrane segment spans residues 1048–1058 (DFTLGIMGGYA). At 1059-1079 (NAKGKTINYTSNKAARNTLDG) the chain is on the extracellular side. The beta stranded transmembrane segment at 1080-1087 (YSVGVYGT) threads the bilayer. Residues 1088–1097 (WYQNGENATG) lie on the Periplasmic side of the membrane. The chain crosses the membrane as a beta stranded span at residues 1098–1108 (LFAETWMQYNW). At 1109–1126 (FNASVKGDGLEEEKYNLN) the chain is on the extracellular side. The chain crosses the membrane as a beta stranded span at residues 1127–1138 (GLTASAGGGYNL). The Periplasmic segment spans residues 1139–1152 (NVHTWTSPEGITGE). The chain crosses the membrane as a beta stranded span at residues 1153–1164 (FWLQPHLQAVWM). Residues 1165–1186 (GVTPDTHQEDNGTVVQGAGKNN) lie on the Extracellular side of the membrane. The chain crosses the membrane as a beta stranded span at residues 1187 to 1198 (IQTKAGIRASWK). Residues 1199 to 1210 (VKSTLDKDTGRR) lie on the Periplasmic side of the membrane. Residues 1211-1221 (FRPYIEANWIH) form a beta stranded membrane-spanning segment. The Extracellular portion of the chain corresponds to 1222–1242 (NTHEFGVKMSDDSQLLSGSRN). Residues 1243 to 1253 (QGEIKTGIEGV) traverse the membrane as a beta stranded segment. Residues 1254–1259 (ITQNLS) are Periplasmic-facing. A beta stranded membrane pass occupies residues 1260–1267 (VNGGVAYQ). Over 1268–1275 (AGGHGSNA) the chain is Extracellular. The beta stranded transmembrane segment at 1276-1284 (ISGALGIKY) threads the bilayer. Residues 1285–1286 (SF) are Periplasmic-facing.

As to quaternary structure, intercellular AIDA-AIDA interaction is responsible for bacterial autoaggregation. AIDA can also interact with antigen 43 (Ag43), and the resultant intercellular AIDA-Ag43 interaction causes cell aggregation. Glycosylated on serine residues by AHH and AAH2 in the cytoplasm. Glycosylated with an average of 19 heptose residues. Glycosylated with either ADP-L, D-heptose or ADP-D, D-heptose. Glycosylation is required for protein folding/stabilization and resistance to protease-mediated degradation. Glycosylation is required for bacteria adhesion to mammalian cells. Glycosylation is dispensable for cell outer membrane localization. Glycosylation is dispensable for AIDA-mediated cell-cell aggregation and induction of biofilm formation. Glycosylation is dispensable for interaction with Ag43.

It localises to the periplasm. It is found in the secreted. Its subcellular location is the cell surface. The protein resides in the cell outer membrane. Its function is as follows. Potent bacterial adhesin that mediates bacterial attachment to a broad variety of human and other mammalian cells. Has additional virulence properties, as it is capable of mediating bacterial autoaggregation via intercellular self-recognition and it is a highly efficient initiator of biofilm formation. The polypeptide is Autotransporter adhesin AIDA-I (aidA) (Escherichia coli).